The primary structure comprises 620 residues: Arginine--tRNA ligase (620 aa).

The short motif at 147 to 157 (ANPTGPIHIGG) is the 'HIGH' region element.

This sequence belongs to the class-I aminoacyl-tRNA synthetase family. Monomer.

It is found in the cytoplasm. The catalysed reaction is tRNA(Arg) + L-arginine + ATP = L-arginyl-tRNA(Arg) + AMP + diphosphate. This is Arginine--tRNA ligase from Bifidobacterium longum (strain NCC 2705).